A 434-amino-acid chain; its full sequence is Trigger factor (434 aa).

A PPIase FKBP-type domain is found at 161 to 246 (GKRVSIDFVG…VNKVEARELP (86 aa)).

It belongs to the FKBP-type PPIase family. Tig subfamily.

The protein resides in the cytoplasm. The enzyme catalyses [protein]-peptidylproline (omega=180) = [protein]-peptidylproline (omega=0). Its function is as follows. Involved in protein export. Acts as a chaperone by maintaining the newly synthesized protein in an open conformation. Functions as a peptidyl-prolyl cis-trans isomerase. The sequence is that of Trigger factor from Vibrio parahaemolyticus serotype O3:K6 (strain RIMD 2210633).